The chain runs to 323 residues: tRNA U34 carboxymethyltransferase (323 aa).

Residues Lys-91, Trp-105, Lys-110, Gly-130, 180–181 (VE), Met-196, Tyr-200, and Arg-315 each bind carboxy-S-adenosyl-L-methionine.

The protein belongs to the class I-like SAM-binding methyltransferase superfamily. CmoB family. In terms of assembly, homotetramer.

It carries out the reaction carboxy-S-adenosyl-L-methionine + 5-hydroxyuridine(34) in tRNA = 5-carboxymethoxyuridine(34) in tRNA + S-adenosyl-L-homocysteine + H(+). Catalyzes carboxymethyl transfer from carboxy-S-adenosyl-L-methionine (Cx-SAM) to 5-hydroxyuridine (ho5U) to form 5-carboxymethoxyuridine (cmo5U) at position 34 in tRNAs. The polypeptide is tRNA U34 carboxymethyltransferase (Trichlorobacter lovleyi (strain ATCC BAA-1151 / DSM 17278 / SZ) (Geobacter lovleyi)).